Here is a 689-residue protein sequence, read N- to C-terminus: Methionine--tRNA ligase (689 aa).

Residues 15-25 (PYANGPVHIGH) carry the 'HIGH' region motif. Residues Cys-147, Cys-150, Cys-160, and Cys-163 each contribute to the Zn(2+) site. Residues 342-346 (KISTS) carry the 'KMSKS' region motif. ATP is bound at residue Thr-345. The 102-residue stretch at 588–689 (DFAKMDIRVA…AVVNAGSMIG (102 aa)) folds into the tRNA-binding domain.

Belongs to the class-I aminoacyl-tRNA synthetase family. MetG type 1 subfamily. As to quaternary structure, homodimer. The cofactor is Zn(2+).

Its subcellular location is the cytoplasm. The catalysed reaction is tRNA(Met) + L-methionine + ATP = L-methionyl-tRNA(Met) + AMP + diphosphate. In terms of biological role, is required not only for elongation of protein synthesis but also for the initiation of all mRNA translation through initiator tRNA(fMet) aminoacylation. The sequence is that of Methionine--tRNA ligase from Cytophaga hutchinsonii (strain ATCC 33406 / DSM 1761 / CIP 103989 / NBRC 15051 / NCIMB 9469 / D465).